Reading from the N-terminus, the 178-residue chain is Zinc finger CCHC domain-containing protein 10 (178 aa).

A CCHC-type zinc finger spans residues 21–38 (VRCQKCLEFGHWTYECKG). The interval 66-178 (QSIGETNIEK…EPQKKKKKKK (113 aa)) is disordered. Composition is skewed to low complexity over residues 85 to 113 (SVTSSSTSSSDSSASESSSESETSASSSS) and 121 to 164 (SLSS…SSES).

This is Zinc finger CCHC domain-containing protein 10 (Zcchc10) from Mus musculus (Mouse).